The chain runs to 210 residues: Secreted effector protein SteA (210 aa).

It localises to the secreted. The protein resides in the host cytoplasm. In terms of biological role, effector proteins function to alter host cell physiology and promote bacterial survival in host tissues. Could be required for passage of bacteria from the peritoneal cavity into the spleen, for survival and replication within host cells, or for avoiding host immune response. The sequence is that of Secreted effector protein SteA (steA) from Salmonella typhimurium (strain 14028s / SGSC 2262).